Consider the following 129-residue polypeptide: MAEQKKEKWGIVHIYSSYNNTIIHATDITGAETIARVSGGRVTRNQRDEGSPYAAMQAAFKLAEVLKERGIENIHIKVRAPGGSGQKNPGPGAQAAIRALARAGLRIGRIEDVTPVPHDGTTPKKRFKK.

This sequence belongs to the universal ribosomal protein uS11 family. Part of the 30S ribosomal subunit.

Functionally, located on the platform of the 30S subunit. This Methanocaldococcus jannaschii (strain ATCC 43067 / DSM 2661 / JAL-1 / JCM 10045 / NBRC 100440) (Methanococcus jannaschii) protein is Small ribosomal subunit protein uS11.